The primary structure comprises 708 residues: DNA ligase (708 aa).

Residues 35-39 (DADYD), 84-85 (SL), and Glu-118 contribute to the NAD(+) site. The active-site N6-AMP-lysine intermediate is Lys-120. Residues Arg-141, Glu-182, Lys-303, and Lys-327 each contribute to the NAD(+) site. Zn(2+) is bound by residues Cys-419, Cys-422, Cys-437, and Cys-443. In terms of domain architecture, BRCT spans 628–708 (TRASEVSGKT…GWAKIVADAQ (81 aa)).

This sequence belongs to the NAD-dependent DNA ligase family. LigA subfamily. Requires Mg(2+) as cofactor. It depends on Mn(2+) as a cofactor.

It catalyses the reaction NAD(+) + (deoxyribonucleotide)n-3'-hydroxyl + 5'-phospho-(deoxyribonucleotide)m = (deoxyribonucleotide)n+m + AMP + beta-nicotinamide D-nucleotide.. DNA ligase that catalyzes the formation of phosphodiester linkages between 5'-phosphoryl and 3'-hydroxyl groups in double-stranded DNA using NAD as a coenzyme and as the energy source for the reaction. It is essential for DNA replication and repair of damaged DNA. The polypeptide is DNA ligase (Rhizorhabdus wittichii (strain DSM 6014 / CCUG 31198 / JCM 15750 / NBRC 105917 / EY 4224 / RW1) (Sphingomonas wittichii)).